Here is a 276-residue protein sequence, read N- to C-terminus: Casein kinase II subunit beta-3 (276 aa).

Disordered stretches follow at residues 1 to 22 (MYKE…LGGA) and 34 to 86 (KKLE…SEGD).

This sequence belongs to the casein kinase 2 subunit beta family. In terms of assembly, heterotetramer of two catalytic alpha subunits and two regulatory beta subunits. Interacts with CCA1. Interacts with LHY. Phosphorylated by alpha subunit.

It is found in the cytoplasm. It localises to the cytosol. Its subcellular location is the nucleus. In terms of biological role, plays a complex role in regulating the basal catalytic activity of the alpha subunit. The tetrameric holoenzyme CK2, composed of two alpha and two beta subunits, phosphorylates the transcription factor PIF1 after an exposure to light, resulting in a proteasome-dependent degradation of PIF1 and promotion of photomorphogenesis. CK2 phosphorylates translation initiation factors. May participate in the regulation of the initiation of translation. Stimulates the binding of CCA1 to promoters. In Arabidopsis thaliana (Mouse-ear cress), this protein is Casein kinase II subunit beta-3 (CKB3).